Reading from the N-terminus, the 361-residue chain is Peptide chain release factor 1 (361 aa).

Glutamine 237 is modified (N5-methylglutamine). Residues 286–306 (AKQDQEQAAKRKSLVGSGDRS) are disordered.

It belongs to the prokaryotic/mitochondrial release factor family. In terms of processing, methylated by PrmC. Methylation increases the termination efficiency of RF1.

Its subcellular location is the cytoplasm. Peptide chain release factor 1 directs the termination of translation in response to the peptide chain termination codons UAG and UAA. This Coxiella burnetii (strain CbuG_Q212) (Coxiella burnetii (strain Q212)) protein is Peptide chain release factor 1.